The following is a 263-amino-acid chain: Shikimate dehydrogenase (NADP(+)) (263 aa).

Shikimate-binding positions include 16-18 and Thr65; that span reads SKS. The active-site Proton acceptor is the Lys69. Asn90 and Asp105 together coordinate shikimate. NADP(+) contacts are provided by residues 125–129 and Leu208; that span reads GSGGS. Position 210 (Tyr210) interacts with shikimate. Gly230 is an NADP(+) binding site.

The protein belongs to the shikimate dehydrogenase family. As to quaternary structure, homodimer.

It catalyses the reaction shikimate + NADP(+) = 3-dehydroshikimate + NADPH + H(+). The protein operates within metabolic intermediate biosynthesis; chorismate biosynthesis; chorismate from D-erythrose 4-phosphate and phosphoenolpyruvate: step 4/7. Involved in the biosynthesis of the chorismate, which leads to the biosynthesis of aromatic amino acids. Catalyzes the reversible NADPH linked reduction of 3-dehydroshikimate (DHSA) to yield shikimate (SA). The polypeptide is Shikimate dehydrogenase (NADP(+)) (Helicobacter pylori (strain P12)).